A 395-amino-acid chain; its full sequence is Vomeronasal type-1 receptor 2 (395 aa).

Residues 12-32 traverse the membrane as a helical segment; it reads LYPINISAAWHLGPLPVSCFV. Residues 33 to 51 are Extracellular-facing; sequence SNKYQCSLAFGATTGLRVL. The chain crosses the membrane as a helical span at residues 52–72; that stretch reads VVVVPQTQLSFLSSLCLVSLF. Residues 73 to 93 lie on the Cytoplasmic side of the membrane; sequence LHSLVSAHGEKPTKPVGLDPT. A helical transmembrane segment spans residues 94–114; that stretch reads LFQVVVGILGNFSLLYYYMFL. The Extracellular segment spans residues 115 to 170; that stretch reads YFRGYKPRSTDLILRHLTVADSLVILSKRIPETMATFGLKHFDNYFGCKFLLYAHR. The chain crosses the membrane as a helical span at residues 171–191; the sequence is VGRGVSIGSTCLLSVFQVITI. Over 192 to 208 the chain is Cytoplasmic; the sequence is NPRNSRWAEMKVKAPTY. Residues 209 to 229 traverse the membrane as a helical segment; that stretch reads IGLSNILCWAFHMLVNAIFPI. Over 230–267 the chain is Extracellular; sequence YTTGKWSNNNITKKGDLGYCSAPLSDEVTKSVYAALTS. Asn239 carries an N-linked (GlcNAc...) asparagine glycan. A helical membrane pass occupies residues 268–288; the sequence is FHDVLCLGLMLWASSSIVLVL. Residues 289 to 316 lie on the Cytoplasmic side of the membrane; that stretch reads YRHKQQVQHICRNNLYPNSSPGNRAIQS. A helical transmembrane segment spans residues 317 to 337; sequence ILALVSTFALCYALSFITYVY. Residues 338–346 lie on the Extracellular side of the membrane; sequence LALFDNSSW. A glycan (N-linked (GlcNAc...) asparagine) is linked at Asn343. Residues 347-367 traverse the membrane as a helical segment; that stretch reads WLVNTAALIIACFPTISPFVL. Over 368-395 the chain is Cytoplasmic; it reads MCRDPSRSRLCSICCRRNRRFFHDFRKM.

This sequence belongs to the G-protein coupled receptor 1 family.

Its subcellular location is the cell membrane. Functionally, putative pheromone receptor. This chain is Vomeronasal type-1 receptor 2 (VN1R2), found in Homo sapiens (Human).